A 151-amino-acid polypeptide reads, in one-letter code: UPF0178 protein amb2838 (151 aa).

The protein belongs to the UPF0178 family.

The polypeptide is UPF0178 protein amb2838 (Paramagnetospirillum magneticum (strain ATCC 700264 / AMB-1) (Magnetospirillum magneticum)).